Reading from the N-terminus, the 268-residue chain is Tropinone reductase homolog (268 aa).

21 to 45 (LVTGGTRGIGYAIVEELANFGAEVY) contributes to the NADP(+) binding site. S154 is a binding site for substrate. Y167 acts as the Proton acceptor in catalysis.

It belongs to the short-chain dehydrogenases/reductases (SDR) family.

This Datura stramonium (Jimsonweed) protein is Tropinone reductase homolog.